A 1500-amino-acid chain; its full sequence is Myosin-8 (1500 aa).

In terms of domain architecture, Myosin N-terminal SH3-like spans Ala8 to Val57. Residues Ser62–Thr732 form the Myosin motor domain. ATP contacts are provided by residues Gly156–Thr163 and Asn210–Lys218. 4 actin-binding regions span residues Leu496–Tyr530, Asn532–Val555, Phe590–Leu613, and Leu613–Asn635. IQ domains follow at residues Leu735–Gln764, Leu758–Ala787, Arg783–Leu812, Leu806–Ala835, Gln831–Thr860, and Leu854–Glu883. A coiled-coil region spans residues Thr884–Thr1049. A Dilute domain is found at Asp1146–Glu1447.

The protein belongs to the TRAFAC class myosin-kinesin ATPase superfamily. Myosin family. Plant myosin class XI subfamily. As to quaternary structure, homodimer.

The protein localises to the cytoplasm. In terms of biological role, myosin heavy chain that is required for the cell cycle-regulated transport of various organelles and proteins for their segregation. Functions by binding with its tail domain to receptor proteins on organelles and exerting force with its N-terminal motor domain against actin filaments, thereby transporting its cargo along polarized actin cables. The sequence is that of Myosin-8 (XI-B) from Arabidopsis thaliana (Mouse-ear cress).